The primary structure comprises 721 residues: Fatty acid oxidation complex subunit alpha (721 aa).

Residues 1-190 (MIYEGKAITV…KVGVVDAIVA (190 aa)) form an enoyl-CoA hydratase/isomerase region. A substrate-binding site is contributed by Asp-297. The segment at 312–721 (RDVKQAAVLG…SFFGQASSEV (410 aa)) is 3-hydroxyacyl-CoA dehydrogenase. NAD(+) contacts are provided by residues Met-325, Asp-344, 401–403 (VVE), Lys-408, and Ser-430. His-451 serves as the catalytic For 3-hydroxyacyl-CoA dehydrogenase activity. Asn-454 is an NAD(+) binding site. Positions 501 and 660 each coordinate substrate.

It in the N-terminal section; belongs to the enoyl-CoA hydratase/isomerase family. In the C-terminal section; belongs to the 3-hydroxyacyl-CoA dehydrogenase family. In terms of assembly, heterotetramer of two alpha chains (FadB) and two beta chains (FadA).

It catalyses the reaction a (3S)-3-hydroxyacyl-CoA + NAD(+) = a 3-oxoacyl-CoA + NADH + H(+). The enzyme catalyses a (3S)-3-hydroxyacyl-CoA = a (2E)-enoyl-CoA + H2O. It carries out the reaction a 4-saturated-(3S)-3-hydroxyacyl-CoA = a (3E)-enoyl-CoA + H2O. The catalysed reaction is (3S)-3-hydroxybutanoyl-CoA = (3R)-3-hydroxybutanoyl-CoA. It catalyses the reaction a (3Z)-enoyl-CoA = a 4-saturated (2E)-enoyl-CoA. The enzyme catalyses a (3E)-enoyl-CoA = a 4-saturated (2E)-enoyl-CoA. Its pathway is lipid metabolism; fatty acid beta-oxidation. Its function is as follows. Involved in the aerobic and anaerobic degradation of long-chain fatty acids via beta-oxidation cycle. Catalyzes the formation of 3-oxoacyl-CoA from enoyl-CoA via L-3-hydroxyacyl-CoA. It can also use D-3-hydroxyacyl-CoA and cis-3-enoyl-CoA as substrate. This Pseudomonas syringae pv. tomato (strain ATCC BAA-871 / DC3000) protein is Fatty acid oxidation complex subunit alpha.